Here is a 508-residue protein sequence, read N- to C-terminus: Pancreatic alpha-amylase (508 aa).

An N-terminal signal peptide occupies residues 1–15 (MKFVLLLSLIGFCWA). Residue glutamine 16 is modified to Pyrrolidone carboxylic acid. 3 cysteine pairs are disulfide-bonded: cysteine 43-cysteine 101, cysteine 85-cysteine 130, and cysteine 156-cysteine 172. 3 residues coordinate Ca(2+): asparagine 115, arginine 170, and aspartate 179. Arginine 207 is a binding site for chloride. Aspartate 209 serves as the catalytic Nucleophile. Histidine 213 provides a ligand contact to Ca(2+). The active-site Proton donor is glutamate 245. Positions 310 and 349 each coordinate chloride. Cystine bridges form between cysteine 390–cysteine 396 and cysteine 462–cysteine 474.

This sequence belongs to the glycosyl hydrolase 13 family. As to quaternary structure, monomer. Ca(2+) serves as cofactor. It depends on chloride as a cofactor.

Its subcellular location is the secreted. It is found in the extracellular space. The catalysed reaction is Endohydrolysis of (1-&gt;4)-alpha-D-glucosidic linkages in polysaccharides containing three or more (1-&gt;4)-alpha-linked D-glucose units.. The polypeptide is Pancreatic alpha-amylase (Amy2) (Rattus norvegicus (Rat)).